Consider the following 995-residue polypeptide: Serine-aspartate repeat-containing protein C (995 aa).

The first 50 residues, 1-50 (MNNKKTATNRKGMIPNRLNKFSIRKYSVGTASILVGTTLIFGLSGHEAKA), serve as a signal peptide directing secretion. Residues 21-32 (FSIRKYSVGTAS) carry the YSIRK-G/S signaling motif motif. Residues 51-164 (AEHTNGELNQ…STTPKTTTIK (114 aa)) form a disordered region. The interval 51–495 (AEHTNGELNQ…GSSTANGDQK (445 aa)) is ligand binding A region. Polar residues predominate over residues 56-71 (GELNQSKNETTAPSEN). A compositionally biased stretch (basic and acidic residues) spans 72 to 83 (KTTKKVDSRQLK). Over residues 84 to 155 (DNTQTATADQ…SNLTQAKDVS (72 aa)) the composition is skewed to polar residues. 2 CNA-B domains span residues 496–606 (KYNL…YKTP) and 607–717 (KYSL…EEET). Residues 678–975 (TQTGTNTTED…NNSNNGTLFG (298 aa)) are disordered. Acidic residues-rich tracts occupy residues 685–695 (TEDDKDADGGE) and 712–934 (YYEE…DSDS). Positions 958-962 (LPETG) match the LPXTG sorting signal motif. The span at 960-975 (ETGSENNNSNNGTLFG) shows a compositional bias: low complexity. At Thr-961 the chain carries Pentaglycyl murein peptidoglycan amidated threonine. Residues 962 to 995 (GSENNNSNNGTLFGGLFAALGSLLLFGRRKKQNK) constitute a propeptide, removed by sortase.

This sequence belongs to the serine-aspartate repeat-containing protein (SDr) family. Homodimerizes; via N2-Domain. Interacts with host NRXN1; this interaction mediates bacterial attachment to host cells.

It localises to the secreted. The protein resides in the cell wall. In terms of biological role, cell surface-associated calcium-binding protein which plays an important role in adhesion and pathogenesis. Mediates interactions with components of the extracellular matrix such as host NRXN1 to promote bacterial adhesion. In Staphylococcus aureus (strain NCTC 8325 / PS 47), this protein is Serine-aspartate repeat-containing protein C (sdrC).